A 587-amino-acid chain; its full sequence is Polyphenol oxidase E, chloroplastic (587 aa).

Residues 1-87 constitute a chloroplast transit peptide; the sequence is MSSSSSITTT…AANLAPLATA (87 aa). 2 cysteine pairs are disulfide-bonded: cysteine 98–cysteine 114 and cysteine 113–cysteine 180. Cu cation is bound by residues histidine 179, histidine 197, histidine 206, histidine 328, histidine 332, and histidine 363. Positions 183–197 form a cross-link, 2'-(S-cysteinyl)-histidine (Cys-His); sequence CNGAYKVGGKELQVH.

It belongs to the tyrosinase family. The cofactor is Cu(2+).

The protein resides in the plastid. The protein localises to the chloroplast thylakoid lumen. The enzyme catalyses 2 catechol + O2 = 2 1,2-benzoquinone + 2 H2O. Functionally, catalyzes the oxidation of mono- and o-diphenols to o-diquinones. The polypeptide is Polyphenol oxidase E, chloroplastic (Solanum lycopersicum (Tomato)).